Here is a 229-residue protein sequence, read N- to C-terminus: MANWTQLGLQDASSPLMEELIYFHDYTLIILTLITILVFYGLASLLFSSNTNRFFLEGQGLETVWTIIPAVILIFIALPSLQLLYLMDEVNNPYLTIKAIGHQWYWSYEYADYRELEFDSYMIPTSDLTSGNPRLLEVDNRLTLPAQTPIRVLVSSADVLHSWAIPSLGIKMDAVPGRLNQVNFFISRCGLFYGQCSEICGANHSFMPIVIESVNFSTFETWVSNFITE.

Residues 1–26 (MANWTQLGLQDASSPLMEELIYFHDY) are Mitochondrial intermembrane-facing. Residues 27–48 (TLIILTLITILVFYGLASLLFS) form a helical membrane-spanning segment. Over 49–62 (SNTNRFFLEGQGLE) the chain is Mitochondrial matrix. The helical transmembrane segment at 63–82 (TVWTIIPAVILIFIALPSLQ) threads the bilayer. The Mitochondrial intermembrane portion of the chain corresponds to 83-229 (LLYLMDEVNN…ETWVSNFITE (147 aa)). Residues H161, C196, E198, C200, H204, and M207 each contribute to the Cu cation site. Mg(2+) is bound at residue E198.

Belongs to the cytochrome c oxidase subunit 2 family. Component of the cytochrome c oxidase (complex IV, CIV), a multisubunit enzyme composed of a catalytic core of 3 subunits and several supernumerary subunits. The complex exists as a monomer or a dimer and forms supercomplexes (SCs) in the inner mitochondrial membrane with ubiquinol-cytochrome c oxidoreductase (cytochrome b-c1 complex, complex III, CIII). Cu cation serves as cofactor.

It is found in the mitochondrion inner membrane. The catalysed reaction is 4 Fe(II)-[cytochrome c] + O2 + 8 H(+)(in) = 4 Fe(III)-[cytochrome c] + 2 H2O + 4 H(+)(out). Functionally, component of the cytochrome c oxidase, the last enzyme in the mitochondrial electron transport chain which drives oxidative phosphorylation. The respiratory chain contains 3 multisubunit complexes succinate dehydrogenase (complex II, CII), ubiquinol-cytochrome c oxidoreductase (cytochrome b-c1 complex, complex III, CIII) and cytochrome c oxidase (complex IV, CIV), that cooperate to transfer electrons derived from NADH and succinate to molecular oxygen, creating an electrochemical gradient over the inner membrane that drives transmembrane transport and the ATP synthase. Cytochrome c oxidase is the component of the respiratory chain that catalyzes the reduction of oxygen to water. Electrons originating from reduced cytochrome c in the intermembrane space (IMS) are transferred via the dinuclear copper A center (CU(A)) of subunit 2 and heme A of subunit 1 to the active site in subunit 1, a binuclear center (BNC) formed by heme A3 and copper B (CU(B)). The BNC reduces molecular oxygen to 2 water molecules using 4 electrons from cytochrome c in the IMS and 4 protons from the mitochondrial matrix. The protein is Cytochrome c oxidase subunit 2 (COII) of Patiria pectinifera (Starfish).